The following is a 370-amino-acid chain: Ornithine carbamoyltransferase, mitochondrial (370 aa).

The N-terminal 38 residues, 1–38 (MPSPLRTAPQPPLRAFHNPPALRRLYSSTSHSAATPAT), are a transit peptide targeting the mitochondrion. Carbamoyl phosphate is bound by residues 97–100 (STRT), Arg148, His175, and Gln178. 4 residues coordinate L-ornithine: Asn216, Asp282, Ser286, and Met287. Residue Cys324 is the Proton acceptor of the active site. Carbamoyl phosphate-binding positions include 324–325 (CL) and Arg351.

Belongs to the aspartate/ornithine carbamoyltransferase superfamily. OTCase family. In terms of assembly, homotrimer.

It is found in the mitochondrion matrix. It carries out the reaction carbamoyl phosphate + L-ornithine = L-citrulline + phosphate + H(+). It participates in amino-acid biosynthesis; L-arginine biosynthesis; L-arginine from L-ornithine and carbamoyl phosphate: step 1/3. The polypeptide is Ornithine carbamoyltransferase, mitochondrial (argB) (Aspergillus niger).